A 304-amino-acid polypeptide reads, in one-letter code: N-acetylmuramic acid 6-phosphate etherase (304 aa).

In terms of domain architecture, SIS spans 62–225 (IVQAFQNGGR…TTASMVMIGK (164 aa)). E90 (proton donor) is an active-site residue. Residue E121 is part of the active site.

Belongs to the GCKR-like family. MurNAc-6-P etherase subfamily. In terms of assembly, homodimer.

It carries out the reaction N-acetyl-D-muramate 6-phosphate + H2O = N-acetyl-D-glucosamine 6-phosphate + (R)-lactate. The protein operates within amino-sugar metabolism; 1,6-anhydro-N-acetylmuramate degradation. It functions in the pathway amino-sugar metabolism; N-acetylmuramate degradation. Its pathway is cell wall biogenesis; peptidoglycan recycling. Specifically catalyzes the cleavage of the D-lactyl ether substituent of MurNAc 6-phosphate, producing GlcNAc 6-phosphate and D-lactate. Together with AnmK, is also required for the utilization of anhydro-N-acetylmuramic acid (anhMurNAc) either imported from the medium or derived from its own cell wall murein, and thus plays a role in cell wall recycling. The polypeptide is N-acetylmuramic acid 6-phosphate etherase (Actinobacillus pleuropneumoniae serotype 5b (strain L20)).